We begin with the raw amino-acid sequence, 277 residues long: MEGASRHGLATARATLDEATAIPPGAAVTSVDASRVADDLRAVADLLHREPTVRRALTDPGAPPAARTELAARLLGRQLDAVSLRIVQTAVSSRWSRPADLQFALLELSVEALLVEAERDGALEEVEDELFRFARILGQNPQLALALTDPAAPASVKNALLGRLLSGRAHPVTLRLAQQAAADRIHGDVERRLADFSRIAAARRGRVVAVVRTAVPLTDEVIARLGAAISRYFGRQIQLQVDLDPELLGGVVVKVGDEVVDGSVLRRLAAARRALLR.

It belongs to the ATPase delta chain family. As to quaternary structure, F-type ATPases have 2 components, F(1) - the catalytic core - and F(0) - the membrane proton channel. F(1) has five subunits: alpha(3), beta(3), gamma(1), delta(1), epsilon(1). F(0) has three main subunits: a(1), b(2) and c(10-14). The alpha and beta chains form an alternating ring which encloses part of the gamma chain. F(1) is attached to F(0) by a central stalk formed by the gamma and epsilon chains, while a peripheral stalk is formed by the delta and b chains.

It localises to the cell membrane. Functionally, f(1)F(0) ATP synthase produces ATP from ADP in the presence of a proton or sodium gradient. F-type ATPases consist of two structural domains, F(1) containing the extramembraneous catalytic core and F(0) containing the membrane proton channel, linked together by a central stalk and a peripheral stalk. During catalysis, ATP synthesis in the catalytic domain of F(1) is coupled via a rotary mechanism of the central stalk subunits to proton translocation. In terms of biological role, this protein is part of the stalk that links CF(0) to CF(1). It either transmits conformational changes from CF(0) to CF(1) or is implicated in proton conduction. The sequence is that of ATP synthase subunit delta from Frankia alni (strain DSM 45986 / CECT 9034 / ACN14a).